A 350-amino-acid polypeptide reads, in one-letter code: Renin receptor (350 aa).

Positions 1–16 (MAVFVVLLALVAGVLG) are cleaved as a signal peptide. The Extracellular segment spans residues 17–302 (NEFSILKSPG…YNLAYKYNFE (286 aa)). Residues 303 to 323 (YSVVFNMVLWIMIALALAVII) traverse the membrane as a helical segment. The Cytoplasmic segment spans residues 324 to 350 (TSYNIWNMDPGYDSIIYRMTNQKIRMD). The Mediates retrograde transport to the ER motif lies at 346–350 (KIRMD).

As to quaternary structure, interacts with renin. Accessory component of the multisubunit proton-transporting vacuolar (V)-ATPase protein pump. Interacts (via N-terminus) with ATP6AP1 (via N-terminus). Interacts with ATP6V0D1; ATP6V0D1 is a V-ATPase complex subunit and the interaction promotes V-ATPase complex assembly. Interacts with TMEM9; TMEM9 is a V-ATPase assembly regulator and the interaction induces the interaction with ATP6V0D1. Interacts with VMA21 (via N-terminus); VMA21 is a V-ATPase accessory component. Phosphorylated. In terms of processing, proteolytically cleaved by a furin-like convertase in the trans-Golgi network to generate N- and C-terminal fragments. As to expression, expressed in brain, heart, placenta, liver, kidney and pancreas. Barely detectable in lung and skeletal muscles. In the kidney cortex it is restricted to the mesangium of glomeruli. In the coronary and kidney artery it is expressed in the subendothelium, associated to smooth muscles where it colocalizes with REN. Expressed in vascular structures and by syncytiotrophoblast cells in the mature fetal placenta.

It localises to the endoplasmic reticulum membrane. Its subcellular location is the lysosome membrane. The protein localises to the cytoplasmic vesicle. The protein resides in the autophagosome membrane. It is found in the cell projection. It localises to the dendritic spine membrane. Its subcellular location is the axon. The protein localises to the endosome membrane. The protein resides in the clathrin-coated vesicle membrane. It is found in the secretory vesicle. It localises to the synaptic vesicle membrane. Functionally, multifunctional protein which functions as a renin, prorenin cellular receptor and is involved in the assembly of the lysosomal proton-transporting V-type ATPase (V-ATPase) and the acidification of the endo-lysosomal system. May mediate renin-dependent cellular responses by activating ERK1 and ERK2. By increasing the catalytic efficiency of renin in AGT/angiotensinogen conversion to angiotensin I, may also play a role in the renin-angiotensin system (RAS). Through its function in V-type ATPase (v-ATPase) assembly and acidification of the lysosome it regulates protein degradation and may control different signaling pathways important for proper brain development, synapse morphology and synaptic transmission. This Homo sapiens (Human) protein is Renin receptor.